The primary structure comprises 239 residues: Aspartate/glutamate leucyltransferase (239 aa).

The protein belongs to the R-transferase family. Bpt subfamily.

It localises to the cytoplasm. It carries out the reaction N-terminal L-glutamyl-[protein] + L-leucyl-tRNA(Leu) = N-terminal L-leucyl-L-glutamyl-[protein] + tRNA(Leu) + H(+). The enzyme catalyses N-terminal L-aspartyl-[protein] + L-leucyl-tRNA(Leu) = N-terminal L-leucyl-L-aspartyl-[protein] + tRNA(Leu) + H(+). Its function is as follows. Functions in the N-end rule pathway of protein degradation where it conjugates Leu from its aminoacyl-tRNA to the N-termini of proteins containing an N-terminal aspartate or glutamate. The chain is Aspartate/glutamate leucyltransferase from Campylobacter jejuni (strain RM1221).